Here is a 20-residue protein sequence, read N- to C-terminus: Brevinin-1SPb (20 aa).

C14 and C20 are disulfide-bonded.

As to expression, expressed by the skin glands.

The protein resides in the secreted. In terms of biological role, antimicrobial peptide with activity against Gram-negative and Gram-positive bacteria (MIC=50 uM against E.coli, MIC=6 uM against S.aureus) and fungi (MIC=13 uM against C.albicans). Shows hemolytic activity on human erythrocytes (HC(50)=25 uM). The chain is Brevinin-1SPb from Lithobates septentrionalis (Mink frog).